A 634-amino-acid polypeptide reads, in one-letter code: MINIRFPDGSIREFEAGVNSLDVAKSISPSLAKATMAAYIDDQLKDAKDAINSNCELRLITVKDPEGLEILRHSCAHLLAHAVKELYPNTEVTIGPVVDNGFYYDFSFKESIGEADLPTIEKKMKELAKKSAPISYRVVPKAEAIEFFKAQGENYKVEIIDSIADEQMKIYTQDNFSDLCRGPHIPNTSVLKAFKLTKLAGAYWRGNSDNEMLTRIYGTCWATKEDLEQYLNMLEEAEKRDHRKIGKVLDLFHFQEDSPGIAFWHDNGVRIWRQVEDYMRASNNKYGCSEIRTPLIADFSLWQKSGHASKYAENMFATKSENRDFAIRPMNCPTCVQVYNTKLHSYRDLPIRMAEFGIVHRNEPSGSLHGLLRVRSFTQDDGHIFCTPEQVEEEVILMVQQCFEVYKDFGFNDFAVKIALRPENRIGDDETWDKSEQMLKNALDANNVSYELLPGEGAFYGPKIEFHLKDAIGRSWQCGTIQLDFSMPQRLGATYIDKNGEKQVPVMLHRAIVGSLERFIGMLIEHYAGNLPLWLAPVQVAVMGISNNQDDYCKEVFIMLEKNGIRAKLDLRNEKIGFKIREHTLLRVPYLVILGKNEQEQKIITIRKHSGEDLGQMSVDDFCAFLDKQIQAKE.

The 61-residue stretch at 1-61 folds into the TGS domain; the sequence is MINIRFPDGS…NSNCELRLIT (61 aa). Positions 241-532 are catalytic; the sequence is DHRKIGKVLD…LIEHYAGNLP (292 aa). Positions 332, 383, and 509 each coordinate Zn(2+).

It belongs to the class-II aminoacyl-tRNA synthetase family. Homodimer. Zn(2+) is required as a cofactor.

It localises to the cytoplasm. The enzyme catalyses tRNA(Thr) + L-threonine + ATP = L-threonyl-tRNA(Thr) + AMP + diphosphate + H(+). Functionally, catalyzes the attachment of threonine to tRNA(Thr) in a two-step reaction: L-threonine is first activated by ATP to form Thr-AMP and then transferred to the acceptor end of tRNA(Thr). Also edits incorrectly charged L-seryl-tRNA(Thr). The sequence is that of Threonine--tRNA ligase from Francisella tularensis subsp. tularensis (strain FSC 198).